A 319-amino-acid polypeptide reads, in one-letter code: Ribonuclease Z (319 aa).

His62, His64, Asp66, His67, His145, Asp216, and His274 together coordinate Zn(2+). Asp66 serves as the catalytic Proton acceptor.

Belongs to the RNase Z family. In terms of assembly, homodimer. The cofactor is Zn(2+).

It carries out the reaction Endonucleolytic cleavage of RNA, removing extra 3' nucleotides from tRNA precursor, generating 3' termini of tRNAs. A 3'-hydroxy group is left at the tRNA terminus and a 5'-phosphoryl group is left at the trailer molecule.. Its function is as follows. Zinc phosphodiesterase, which displays some tRNA 3'-processing endonuclease activity. Probably involved in tRNA maturation, by removing a 3'-trailer from precursor tRNA. In Synechococcus sp. (strain CC9902), this protein is Ribonuclease Z.